The primary structure comprises 185 residues: Capsid protein (185 aa).

The tract at residues 136–185 is disordered; that stretch reads NAPILSTLPETTVVRRRDRGRSPRRRTPSPRRRRSQSPRRRRSQSRESQC. Basic residues predominate over residues 149 to 178; the sequence is VRRRDRGRSPRRRTPSPRRRRSQSPRRRRS. S157, S164, and S172 each carry phosphoserine; by host. One copy of the 1; half-length repeat lies at 157 to 163; it reads SPRRRTP. The segment at 157 to 179 is 3 X 8 AA repeats of S-P-R-R-R-[PR]-S-Q; it reads SPRRRTPSPRRRRSQSPRRRRSQ. The Bipartite nuclear localization signal motif lies at 160-177; the sequence is RRTPSPRRRRSQSPRRRR. Tandem repeats lie at residues 164 to 171 and 172 to 179. Residues 179 to 185 form an RNA binding region; that stretch reads QSRESQC.

It belongs to the orthohepadnavirus core antigen family. Homodimerizes, then multimerizes. Interacts with cytosol exposed regions of viral L glycoprotein present in the reticulum-to-Golgi compartment. Interacts with human FLNB. Phosphorylated form interacts with host importin alpha; this interaction depends on the exposure of the NLS, which itself depends upon genome maturation and/or phosphorylation of the capsid protein. Interacts with host NUP153. In terms of processing, phosphorylated by host SRPK1, SRPK2, and maybe protein kinase C or GAPDH. Phosphorylation is critical for pregenomic RNA packaging. Protein kinase C phosphorylation is stimulated by HBx protein and may play a role in transport of the viral genome to the nucleus at the late step during the viral replication cycle.

The protein localises to the virion. It is found in the host cytoplasm. Self assembles to form an icosahedral capsid. Most capsids appear to be large particles with an icosahedral symmetry of T=4 and consist of 240 copies of capsid protein, though a fraction forms smaller T=3 particles consisting of 180 capsid proteins. Entering capsids are transported along microtubules to the nucleus. Phosphorylation of the capsid is thought to induce exposure of nuclear localization signal in the C-terminal portion of the capsid protein that allows binding to the nuclear pore complex via the importin (karyopherin-) alpha and beta. Capsids are imported in intact form through the nuclear pore into the nuclear basket, where it probably binds NUP153. Only capsids that contain the mature viral genome can release the viral DNA and capsid protein into the nucleoplasm. Immature capsids get stuck in the basket. Capsids encapsulate the pre-genomic RNA and the P protein. Pre-genomic RNA is reverse-transcribed into DNA while the capsid is still in the cytoplasm. The capsid can then either be directed to the nucleus, providing more genomes for transcription, or bud through the endoplasmic reticulum to provide new virions. The sequence is that of Capsid protein from Homo sapiens (Human).